The primary structure comprises 117 residues: MTHAHITSWFIMIILFLIAVSMQRSGAAKANIIKMVLRLFYIITIITGLLLLHSIASISGLYWLKALAGLWVIGAMEMVLVAGKKGKSMAAGWTQWVIALVVTLFLGLLLPLGFDLF.

The next 4 membrane-spanning stretches (helical) occupy residues 1 to 21 (MTHA…IAVS), 39 to 59 (LFYI…ASIS), 61 to 81 (LYWL…MVLV), and 97 to 117 (VIAL…FDLF).

The protein belongs to the UPF0344 family.

The protein resides in the cell membrane. This Geobacillus thermodenitrificans (strain NG80-2) protein is UPF0344 protein GTNG_0604.